The chain runs to 409 residues: MVLSQRQREELNQAIADYLGTNGYADSLEAFRKEADLSTEAEKKFGGLLEKKWTSVIRLQKKVMELEAKLTEAEKEVIEGAPTKNKRTPGEWIPRPPEKYSLTGHRASITRVIFHPIFGLMVSASEDATIKIWDFETGEYERSLKGHTDSVQDVAFDAQGKLLVSCSADLSIKLWDFQQSYACVKTMHGHDHNVSSVAFVPAGDYVLSASRDRTIKMWEVATGYCVKTYTGHREWVRMVRVHIEGSLFATCSNDHTIRVWLTNSKDCKVELRDHEHTVECIAWAPEAAASAINEAAGADNKKGHHQGPFLASGSRDKTIRIWDVSVGLCLLTLNGHDNWVRGLAFHPGGKYLVSASDDKTIRVWDLRNKRCMKTLYAHQHFCTSIDFHKAHPYVISGSVDQTVKVWECR.

The LisH domain occupies 7 to 39 (QREELNQAIADYLGTNGYADSLEAFRKEADLST). Residues 54 to 81 (TSVIRLQKKVMELEAKLTEAEKEVIEGA) are a coiled coil. WD repeat units follow at residues 104-145 (GHRA…RSLK), 146-185 (GHTD…ACVK), 189-228 (GHDH…CVKT), 231-270 (GHRE…CKVE), 273-332 (DHEH…CLLT), 335-374 (GHDN…CMKT), and 377-409 (AHQH…WECR).

This sequence belongs to the WD repeat LIS1/nudF family.

It localises to the cytoplasm. The protein localises to the cytoskeleton. It is found in the microtubule organizing center. Its subcellular location is the centrosome. Functionally, positively regulates the activity of the minus-end directed microtubule motor protein dynein. May enhance dynein-mediated microtubule sliding by targeting dynein to the microtubule plus end. Required for several dynein- and microtubule-dependent processes. In Drosophila willistoni (Fruit fly), this protein is Lissencephaly-1 homolog.